Reading from the N-terminus, the 313-residue chain is Protoheme IX farnesyltransferase (313 aa).

A run of 9 helical transmembrane segments spans residues 29–49 (VISLLLWTTVTAMFMAARGWP), 57–77 (LWLLIVVSVAGYMSAGSAGVF), 101–123 (LISSRNAAIFGTTLQVLSFVMLW), 124–144 (VWGTPLAAWMSLAGFVFYVVI), 157–177 (IVIGGAAGCFPPLVGWAAVTG), 185–205 (YLFAIIFFWTPVHFWALALMI), 225–245 (MTVAQIGLYAIYTVVLSLMPV), 247–267 (FGAVSWIYFVSGALLGAWLLW), and 287–307 (AVPLYLYSMLYLALLFLAGAI).

Belongs to the UbiA prenyltransferase family. Protoheme IX farnesyltransferase subfamily.

Its subcellular location is the cell membrane. The catalysed reaction is heme b + (2E,6E)-farnesyl diphosphate + H2O = Fe(II)-heme o + diphosphate. It functions in the pathway porphyrin-containing compound metabolism; heme O biosynthesis; heme O from protoheme: step 1/1. Its function is as follows. Converts heme B (protoheme IX) to heme O by substitution of the vinyl group on carbon 2 of heme B porphyrin ring with a hydroxyethyl farnesyl side group. The sequence is that of Protoheme IX farnesyltransferase from Deinococcus radiodurans (strain ATCC 13939 / DSM 20539 / JCM 16871 / CCUG 27074 / LMG 4051 / NBRC 15346 / NCIMB 9279 / VKM B-1422 / R1).